The following is a 709-amino-acid chain: Phosphoribosylformylglycinamidine synthase subunit PurL (709 aa).

His36 is a catalytic residue. ATP contacts are provided by Tyr39 and Lys80. Glu82 is a binding site for Mg(2+). Substrate contacts are provided by residues 83-86 and Arg105; that span reads SHNH. Catalysis depends on His84, which acts as the Proton acceptor. Asp106 lines the Mg(2+) pocket. Position 226 (Gln226) interacts with substrate. Mg(2+) is bound at residue Asp252. A substrate-binding site is contributed by 294–296; that stretch reads ETQ. 2 residues coordinate ATP: Asp470 and Gly507. Ser510 is a substrate binding site.

Belongs to the FGAMS family. Monomer. Part of the FGAM synthase complex composed of 1 PurL, 1 PurQ and 2 PurS subunits.

It localises to the cytoplasm. The enzyme catalyses N(2)-formyl-N(1)-(5-phospho-beta-D-ribosyl)glycinamide + L-glutamine + ATP + H2O = 2-formamido-N(1)-(5-O-phospho-beta-D-ribosyl)acetamidine + L-glutamate + ADP + phosphate + H(+). It participates in purine metabolism; IMP biosynthesis via de novo pathway; 5-amino-1-(5-phospho-D-ribosyl)imidazole from N(2)-formyl-N(1)-(5-phospho-D-ribosyl)glycinamide: step 1/2. Functionally, part of the phosphoribosylformylglycinamidine synthase complex involved in the purines biosynthetic pathway. Catalyzes the ATP-dependent conversion of formylglycinamide ribonucleotide (FGAR) and glutamine to yield formylglycinamidine ribonucleotide (FGAM) and glutamate. The FGAM synthase complex is composed of three subunits. PurQ produces an ammonia molecule by converting glutamine to glutamate. PurL transfers the ammonia molecule to FGAR to form FGAM in an ATP-dependent manner. PurS interacts with PurQ and PurL and is thought to assist in the transfer of the ammonia molecule from PurQ to PurL. The protein is Phosphoribosylformylglycinamidine synthase subunit PurL of Saccharolobus islandicus (strain M.14.25 / Kamchatka #1) (Sulfolobus islandicus).